The following is a 120-amino-acid chain: Chaperonin GroEL (120 aa).

Residue 23-27 (DGTTT) participates in ATP binding.

Belongs to the chaperonin (HSP60) family. As to quaternary structure, forms a cylinder of 14 subunits composed of two heptameric rings stacked back-to-back. Interacts with the co-chaperonin GroES.

It is found in the cytoplasm. It catalyses the reaction ATP + H2O + a folded polypeptide = ADP + phosphate + an unfolded polypeptide.. Functionally, together with its co-chaperonin GroES, plays an essential role in assisting protein folding. The GroEL-GroES system forms a nano-cage that allows encapsulation of the non-native substrate proteins and provides a physical environment optimized to promote and accelerate protein folding. The sequence is that of Chaperonin GroEL from Mycolicibacterium rhodesiae (Mycobacterium rhodesiae).